A 215-amino-acid chain; its full sequence is Urease accessory protein UreG 2 (215 aa).

GTP is bound at residue 11-18; sequence GPVGSGKT.

The protein belongs to the SIMIBI class G3E GTPase family. UreG subfamily. In terms of assembly, homodimer. UreD, UreF and UreG form a complex that acts as a GTP-hydrolysis-dependent molecular chaperone, activating the urease apoprotein by helping to assemble the nickel containing metallocenter of UreC. The UreE protein probably delivers the nickel.

It localises to the cytoplasm. Functionally, facilitates the functional incorporation of the urease nickel metallocenter. This process requires GTP hydrolysis, probably effectuated by UreG. The protein is Urease accessory protein UreG 2 of Methylorubrum populi (strain ATCC BAA-705 / NCIMB 13946 / BJ001) (Methylobacterium populi).